The chain runs to 567 residues: Pyrethroid hydrolase Ces2e (567 aa).

The N-terminal stretch at 1–36 (MAQTRAWKSIMPLESLPGWLNAVVWGLLLLFCQVQG) is a signal peptide. Gln37 bears the Pyrrolidone carboxylic acid mark. Cys105 and Cys132 are disulfide-bonded. The active-site Acyl-ester intermediate is Ser237. Cys289 and Cys300 are oxidised to a cystine. Active-site charge relay system residues include Glu354 and His465.

It belongs to the type-B carboxylesterase/lipase family. In terms of tissue distribution, expressed in liver.

The protein resides in the microsome. It carries out the reaction all-trans-retinyl hexadecanoate + H2O = all-trans-retinol + hexadecanoate + H(+). The enzyme catalyses (-)-trans-permethrin + H2O = (3-phenoxyphenyl)methanol + (1S,3R)-3-(2,2-dichlorovinyl)-2,2-dimethylcyclopropanecarboxylate + H(+). Carboxylesterase that catalyzes the hydrolysis of pyrethroids pesticides. Hydrolyzes trans-permethrin at a rate about 22-fold higher than cis-permethrin. Also hydrolyzes trans-cypermethrin. Hydrolyzes retinyl esters. This chain is Pyrethroid hydrolase Ces2e, found in Rattus norvegicus (Rat).